We begin with the raw amino-acid sequence, 83 residues long: Large ribosomal subunit protein bL31B (83 aa).

Belongs to the bacterial ribosomal protein bL31 family. Type B subfamily. In terms of assembly, part of the 50S ribosomal subunit.

The protein is Large ribosomal subunit protein bL31B of Leifsonia xyli subsp. xyli (strain CTCB07).